Here is a 300-residue protein sequence, read N- to C-terminus: Ribosomal protein bS6--L-glutamate ligase (300 aa).

An ATP-grasp domain is found at 104–287 (MQLLARQGID…IAGKMIRWIE (184 aa)). ATP is bound by residues lysine 141, 178 to 179 (EY), aspartate 187, and 211 to 213 (RSN). Mg(2+)-binding residues include aspartate 248, glutamate 260, and asparagine 262. Mn(2+) contacts are provided by aspartate 248, glutamate 260, and asparagine 262.

This sequence belongs to the RimK family. The cofactor is Mg(2+). Mn(2+) is required as a cofactor.

In terms of biological role, an L-glutamate ligase that catalyzes the ATP-dependent post-translational addition of glutamate residues to the C-terminus of ribosomal protein bS6 (RpsF). Is also able to catalyze the synthesis of poly-alpha-glutamate in vitro, via ATP hydrolysis from unprotected glutamate as substrate. The number of glutamate residues added to either RpsF or to poly-alpha-glutamate changes with pH. In Shigella dysenteriae serotype 1 (strain Sd197), this protein is Ribosomal protein bS6--L-glutamate ligase.